Consider the following 602-residue polypeptide: MEKEVIAYLDNETIIDSQSVKNTNLKEIYFDNSKESLEVIRHSCAHLMAQAIKSLYPEAKFFVGPVIEDGFYYDFRVESKIGEEDLVKIEKKMKELAEAKIEISKYEITKSEALAKFQNDDLKQEVLLRIPDGAVSIYKQGEFEDLCRGPHAPNTKFLRFFKLTRVAGAYLGGDEKREMLTRIYGTAFADKESLKEYLTIIEEAKKRDHRKLGTELKLFTFDDEIGGGLPIWLSNGARLRSKLEHMLYKIHRLRGYEPVRGPELLKADAWKISGHYANYKENMYFTQIDEQEYGIKPMNCVGHIKIYQSDVRSYRDLPLKFFEYGVVHRHEKSGVLHGLFRVREFTQDDAHIFCMPSQIKEQVLEILAFVDNLMKLFDFSYEMEISTKPEKAIGDDEIWEIATKALKEALNEQGLKYGIDEGGGAFYGPKIDIKITDALKRKWQCGTVQVDFNLPSRFKLEYTDSDNEKKQPVMLHRAILGSFERFIGILTEHCAGEFPFFIAPTAVGIVPIGEAHIAYAKEIQKELLELNIDSEVYEKNESLSKKIRIAEKQKLPMILVLGDDEVVKRSVALRDRRAKEQKNLSLDEFIKLVKEKMSEVHF.

The segment at 208-499 (DHRKLGTELK…LTEHCAGEFP (292 aa)) is catalytic. The Zn(2+) site is built by C300, H351, and H476.

This sequence belongs to the class-II aminoacyl-tRNA synthetase family. As to quaternary structure, homodimer. Zn(2+) serves as cofactor.

Its subcellular location is the cytoplasm. The enzyme catalyses tRNA(Thr) + L-threonine + ATP = L-threonyl-tRNA(Thr) + AMP + diphosphate + H(+). Its function is as follows. Catalyzes the attachment of threonine to tRNA(Thr) in a two-step reaction: L-threonine is first activated by ATP to form Thr-AMP and then transferred to the acceptor end of tRNA(Thr). Also edits incorrectly charged L-seryl-tRNA(Thr). In Campylobacter jejuni subsp. jejuni serotype O:23/36 (strain 81-176), this protein is Threonine--tRNA ligase.